The following is a 247-amino-acid chain: Ras-like protein family member 11B (247 aa).

The tract at residues 29-247 (ASSRVIKIAV…SAKVRTATSV (219 aa)) is small GTPase-like. GTP-binding positions include 40–47 (GGSGVGKT), 87–91 (DTPGV), and 152–155 (NKAD). The segment at 205–228 (QNTGTPERRKNSLIPRPKSPNMQD) is disordered.

The protein belongs to the small GTPase superfamily. Ras family.

It carries out the reaction GTP + H2O = GDP + phosphate + H(+). In Xenopus tropicalis (Western clawed frog), this protein is Ras-like protein family member 11B.